A 373-amino-acid chain; its full sequence is MKEYVMLLLLAVCSAKPFFSPSHTALKNMMLKDMEDTDDDDNDDDDNSLFPTKEPVNPFFPFDLFPTCPFGCQCYSRVVHCSDLGLTSVPNNIPFDTRMVDLQNNKIKEIKENDFKGLTSLYALILNNNKLTKIHPKTFLTTKKLRRLYLSHNQLSEIPLNLPKSLAELRIHDNKVKKIQKDTFKGMNALHVLEMSANPLENNGIEPGAFEGVTVFHIRIAEAKLTSIPKGLPPTLLELHLDFNKISTVELEDLKRYRELQRLGLGNNRITDIENGTFANIPRVREIHLEHNKLKKIPSGLQELKYLQIIFLHYNSIAKVGVNDFCPTVPKMKKSLYSAISLFNNPMKYWEIQPATFRCVLGRMSVQLGNVGK.

Residues 1–15 form the signal peptide; that stretch reads MKEYVMLLLLAVCSA. A propeptide spanning residues 16-32 is cleaved from the precursor; sequence KPFFSPSHTALKNMMLK. Ser48 is a glycosylation site (O-linked (GalNAc...) serine). Residues 59 to 95 enclose the LRRNT domain; that stretch reads FFPFDLFPTCPFGCQCYSRVVHCSDLGLTSVPNNIPF. Disulfide bonds link Cys68–Cys74 and Cys72–Cys81. LRR repeat units lie at residues 96–117, 120–141, 144–166, 167–186, 189–212, 235–255, 259–280, 283–305, 306–327, 328–349, and 350–373; these read DTRMVDLQNNKIKEIKENDFKG, SLYALILNNNKLTKIHPKTFLT, KLRRLYLSHNQLSEIPLNLPKSL, AELRIHDNKVKKIQKDTFKG, ALHVLEMSANPLENNGIEPGAFEG, TLLELHLDFNKISTVELEDLK, ELQRLGLGNNRITDIENGTFAN, RVREIHLEHNKLKKIPSGLQELK, YLQIIFLHYNSIAKVGVNDFCP, TVPKMKKSLYSAISLFNNPMKY, and WEIQPATFRCVLGRMSVQLGNVGK. The segment at 159–205 is interaction with TGFB1; that stretch reads PLNLPKSLAELRIHDNKVKKIQKDTFKGMNALHVLEMSANPLENNGI. Residue Asn275 is glycosylated (N-linked (GlcNAc...) asparagine). An intrachain disulfide couples Cys326 to Cys359.

This sequence belongs to the small leucine-rich proteoglycan (SLRP) family. SLRP class I subfamily. In terms of assembly, interacts with type I collagen. DCN can inhibit collagen binding. Interacts with TGFB1, TGFB2 and TGFB3. DCN, BGN, and FMOD inhibit binding to TGFB1. Interacts with BMP2. Interacts in vitro with type II collagen. In terms of tissue distribution, higher expression in heart, also detected in kidney, stomach, testes, and skin but only weakly in lung, skeletal muscle, small intestine, and thymus. Expressed specifically and predominantly in the periodontal ligament (PDL). During tooth development, strong expression is seen in the dental follicle, which is the progenitor tissue that forms cementum, alveolar bone, and the PDL. Expressed in the perichondria of the maxilla, mandible, vertebrae, and long bones. Predominantly expressed in the perichondrium/periosteum of long bones (at protein level).

It localises to the secreted. Its subcellular location is the extracellular space. It is found in the extracellular matrix. In terms of biological role, binds calcium and plays a role in osteoblast-driven collagen biomineralization activity. Critical regulator of TGF-beta in articular cartilage and plays an essential role in cartilage homeostasis and osteoarthritis (OA) pathogenesis. Negatively regulates chondrogenesis in the articular cartilage by blocking the TGF-beta/receptor interaction on the cell surface and inhibiting the canonical TGF-beta/Smad signal. Negatively regulates periodontal ligament (PDL) differentiation and mineralization to ensure that the PDL is not ossified and to maintain homeostasis of the tooth-supporting system. Inhibits BMP2-induced cytodifferentiation of PDL cells by preventing its binding to BMPR1B/BMP type-1B receptor, resulting in inhibition of BMP-dependent activation of SMAD proteins. Inhibits the interaction between TGFB1 and TGF-beta receptor type II in the presence of heparin/heparan sulfate in vitro. The polypeptide is Asporin (Aspn) (Mus musculus (Mouse)).